The primary structure comprises 639 residues: Protein P1 (639 aa).

An N-terminal signal peptide occupies residues Met-1–Ala-20. The next 3 membrane-spanning stretches (helical) occupy residues Ala-121–Ala-141, Ile-144–Ile-164, and Ala-172–Trp-192. The Peptidase S39 domain maps to Val-207–Glu-399. Active-site for protease activity residues include His-255, Asp-286, and Ser-354. Disordered stretches follow at residues Thr-456–Ser-510 and Val-542–Ala-639. Residues Thr-463–Pro-487 are compositionally biased toward polar residues. Over residues Lys-551–Lys-561 the composition is skewed to basic residues. Residues Asn-562–Ser-576 show a composition bias toward polar residues.

Belongs to the peptidase S39B family. In terms of processing, specific enzymatic cleavages in vivo yield mature proteins. The protease probably cleaves itself and releases the VPg protein. The VPg protein is probably further cleaved in its C-terminus.

It localises to the membrane. Its function is as follows. Precursor from which the VPg molecule is probably released at the onset of the RNA synthesis. Essential for virus replication. This is Protein P1 from Solanum tuberosum (Potato).